The sequence spans 130 residues: Albumin-1 C (130 aa).

The first 26 residues, 1–26 (MASVKLASLIVLFATLGMFLTKNVGA), serve as a signal peptide directing secretion. 3 disulfides stabilise this stretch: Cys29–Cys46, Cys33–Cys48, and Cys41–Cys58. Propeptides lie at residues 64–69 (VFLRTN) and 123–130 (LLKSVSTA).

Post-translationally, the C-terminal glycine may be removed from PA1b. In terms of tissue distribution, major component of both the cotyledons and embryonic axes of mature seeds.

Functionally, PA1b binds to basic 7S globulin (BG) and stimulates its phosphorylation activity. Involved in the signal transduction system to regulate the growth and differentiation as a hormone peptide. Toxic to various insects through binding to a high affinity binding site in the insect gut. The protein is Albumin-1 C of Pisum sativum (Garden pea).